We begin with the raw amino-acid sequence, 525 residues long: Chromosomal replication initiator protein DnaA (525 aa).

Residues 1-71 (MNDFWQHCSA…SDLARDFWNA (71 aa)) are domain I, interacts with DnaA modulators. The segment at 71-188 (APIEVQFVLD…GEADSMYERS (118 aa)) is domain II. Residues 160 to 182 (AAAGRRTWRPGPGAAPANGGEAD) form a disordered region. Residues 169–181 (PGPGAAPANGGEA) are compositionally biased toward low complexity. Residues 189–405 (KLNPVLTFDN…GALRKILAYS (217 aa)) form a domain III, AAA+ region region. ATP contacts are provided by G233, G235, K236, and T237. The interval 406-525 (KFHGREISIE…LHVLEQTLKG (120 aa)) is domain IV, binds dsDNA.

Belongs to the DnaA family. In terms of assembly, oligomerizes as a right-handed, spiral filament on DNA at oriC.

It localises to the cytoplasm. Its function is as follows. Plays an essential role in the initiation and regulation of chromosomal replication. ATP-DnaA binds to the origin of replication (oriC) to initiate formation of the DNA replication initiation complex once per cell cycle. Binds the DnaA box (a 9 base pair repeat at the origin) and separates the double-stranded (ds)DNA. Forms a right-handed helical filament on oriC DNA; dsDNA binds to the exterior of the filament while single-stranded (ss)DNA is stabiized in the filament's interior. The ATP-DnaA-oriC complex binds and stabilizes one strand of the AT-rich DNA unwinding element (DUE), permitting loading of DNA polymerase. After initiation quickly degrades to an ADP-DnaA complex that is not apt for DNA replication. Binds acidic phospholipids. The sequence is that of Chromosomal replication initiator protein DnaA from Burkholderia ambifaria (strain ATCC BAA-244 / DSM 16087 / CCUG 44356 / LMG 19182 / AMMD) (Burkholderia cepacia (strain AMMD)).